The chain runs to 135 residues: Cofilin-4 (135 aa).

Residues 3–135 (SCASINDEVI…SQSLVEERCK (133 aa)) form the ADF-H domain.

This sequence belongs to the actin-binding proteins ADF family.

It localises to the cytoplasm. It is found in the cytoskeleton. Its function is as follows. Controls actin polymerization and depolymerization. The polypeptide is Cofilin-4 (cofE) (Dictyostelium discoideum (Social amoeba)).